Reading from the N-terminus, the 368-residue chain is Glutaminyl-peptide cyclotransferase (368 aa).

Positions 1 to 23 (MARERRDSKAATFFCLAWALCLA) are cleaved as a signal peptide. N-linked (GlcNAc...) asparagine glycosylation is found at Asn-53 and Asn-65. Cys-143 and Cys-169 are oxidised to a cystine. Asp-164 is a Zn(2+) binding site. Residue Glu-207 is the Proton acceptor of the active site. Glu-208 contacts Zn(2+). Catalysis depends on Asp-254, which acts as the Proton acceptor. Asn-292 carries an N-linked (GlcNAc...) asparagine glycan. His-336 is a Zn(2+) binding site. Asn-352 carries N-linked (GlcNAc...) asparagine glycosylation.

This sequence belongs to the glutaminyl-peptide cyclotransferase family. Expressed by the venom gland.

It localises to the secreted. It carries out the reaction N-terminal L-glutaminyl-[peptide] = N-terminal 5-oxo-L-prolyl-[peptide] + NH4(+). Responsible for the biosynthesis of pyroglutamyl peptides. Has a bias against acidic and tryptophan residues adjacent to the N-terminal glutaminyl residue and a lack of importance of chain length after the second residue. Also catalyzes N-terminal pyroglutamate formation. The protein is Glutaminyl-peptide cyclotransferase (QPCT) of Bothrops jararaca (Jararaca).